A 146-amino-acid chain; its full sequence is Large ribosomal subunit protein uL15 (146 aa).

The span at 1–13 (MKLHELKPAEGSR) shows a compositional bias: basic and acidic residues. The segment at 1–51 (MKLHELKPAEGSRKVRNRVGRGIGSGNGKTAGRGHKGQNARSGGGVRLGFE) is disordered. Composition is skewed to gly residues over residues 21–31 (RGIGSGNGKTA) and 42–51 (SGGGVRLGFE).

Belongs to the universal ribosomal protein uL15 family. Part of the 50S ribosomal subunit.

Binds to the 23S rRNA. The protein is Large ribosomal subunit protein uL15 of Bacillus mycoides (strain KBAB4) (Bacillus weihenstephanensis).